The chain runs to 346 residues: UPF0283 membrane protein VIBHAR_01918 (346 aa).

A compositionally biased stretch (basic and acidic residues) spans 1–17 (MSELKQKQVFKEKVMHS). The tract at residues 1–28 (MSELKQKQVFKEKVMHSEEEDVSPELNT) is disordered. 2 helical membrane passes run 73-93 (LFAT…ITAI) and 98-118 (WLAL…LGAL).

This sequence belongs to the UPF0283 family.

It localises to the cell inner membrane. In Vibrio campbellii (strain ATCC BAA-1116), this protein is UPF0283 membrane protein VIBHAR_01918.